A 594-amino-acid chain; its full sequence is Lipolysis-stimulated lipoprotein receptor (594 aa).

The first 35 residues, Met1–Ser35, serve as a signal peptide directing secretion. At Ala36–Asp206 the chain is on the extracellular side. The Ig-like V-type domain maps to Pro89 to Ala181. Residues Cys113 and Cys165 are joined by a disulfide bond. Residues Trp207 to Cys227 traverse the membrane as a helical segment. At Trp228–Val594 the chain is on the cytoplasmic side. Position 283 is a phosphothreonine (Thr283). Ser308 is modified (phosphoserine; by MAPK8 and MAPK9). Phosphoserine occurs at positions 314, 332, 375, and 379. Basic and acidic residues predominate over residues Ser375–Ser387. The disordered stretch occupies residues Ser375–Val594. Thr396 is subject to Phosphothreonine. A phosphoserine mark is found at Ser407, Ser410, and Ser436. Residues Arg435 to Asn444 are compositionally biased toward basic and acidic residues. Residues Arg445–Gly460 show a composition bias toward low complexity. Phosphoserine is present on residues Ser471 and Ser473. Positions Arg472 to Arg550 are enriched in basic and acidic residues. Tyr478 carries the post-translational modification Phosphotyrosine. At Ser576 the chain carries Phosphoserine. Lys583 participates in a covalent cross-link: Glycyl lysine isopeptide (Lys-Gly) (interchain with G-Cter in ubiquitin). Phosphoserine is present on residues Ser588 and Ser591.

It belongs to the immunoglobulin superfamily. LISCH7 family. Homotrimer or homotetramer. Assembles into cell-cell contacts. Interacts (via the cytoplasmic domain) with MARVELD2 (via C-terminal cytoplasmic domain); the interaction is required to recruit MARVELD2 to tricellular contacts. Interacts with OCLN. In terms of processing, phosphorylation at Ser-308 by MAPK8/JNK1 and MAPK9/JNK2 may be required for exclusive localization at tricellular tight junstions. Post-translationally, polyubiquitinated at Lys-583 via 'Lys-63'-linked ubiquitin chains; deubiquitinated by USP53. Expressed in epithelial tissues (at protein level). Specifically expressed in liver and to a lower extent in kidney (at protein level). Also detected in brain, testis, ovaries, adrenal gland, intestine, muscle, and lung. In colon, only expressed in the lower portion of crypts. Expressed in the liver. In terms of tissue distribution, expressed in liver, stomach, small intestine and colon. Also detected in other epithelial tissues.

The protein resides in the cell membrane. It localises to the cell junction. Its subcellular location is the tight junction. Probable role in the clearance of triglyceride-rich lipoprotein from blood. Binds chylomicrons, LDL and VLDL in presence of free fatty acids and allows their subsequent uptake in the cells. Maintains epithelial barrier function by recruiting MARVELD2/tricellulin to tricellular tight junctions. The sequence is that of Lipolysis-stimulated lipoprotein receptor from Mus musculus (Mouse).